The chain runs to 309 residues: Cytochrome c biogenesis protein CcsA (309 aa).

Transmembrane regions (helical) follow at residues 18 to 38, 48 to 68, 73 to 93, 102 to 122, 148 to 168, 216 to 236, 250 to 267, and 279 to 299; these read LGLL…GAVF, LITI…WSIS, ISNL…GQLL, IIPS…CFVL, VMLS…VLFI, SILV…VWAN, TWAF…HMRI, and LAST…FLGI.

This sequence belongs to the CcmF/CycK/Ccl1/NrfE/CcsA family. May interact with ccs1.

It is found in the cellular thylakoid membrane. In terms of biological role, required during biogenesis of c-type cytochromes (cytochrome c6 and cytochrome f) at the step of heme attachment. The protein is Cytochrome c biogenesis protein CcsA of Prochlorococcus marinus (strain AS9601).